Reading from the N-terminus, the 512-residue chain is Glycerol kinase 1 (512 aa).

Residue Thr-18 coordinates ADP. ATP is bound by residues Thr-18, Thr-19, and Ser-20. A sn-glycerol 3-phosphate-binding site is contributed by Thr-18. Arg-22 contributes to the ADP binding site. Arg-88, Glu-89, Tyr-140, and Asp-255 together coordinate sn-glycerol 3-phosphate. Glycerol is bound by residues Arg-88, Glu-89, Tyr-140, Asp-255, and Gln-256. ADP is bound by residues Thr-277 and Gly-321. Residues Thr-277, Gly-321, Gln-325, and Gly-422 each contribute to the ATP site. ADP-binding residues include Gly-422 and Asn-426.

This sequence belongs to the FGGY kinase family.

The enzyme catalyses glycerol + ATP = sn-glycerol 3-phosphate + ADP + H(+). It functions in the pathway polyol metabolism; glycerol degradation via glycerol kinase pathway; sn-glycerol 3-phosphate from glycerol: step 1/1. Its activity is regulated as follows. Inhibited by fructose 1,6-bisphosphate (FBP). Functionally, key enzyme in the regulation of glycerol uptake and metabolism. Catalyzes the phosphorylation of glycerol to yield sn-glycerol 3-phosphate. The chain is Glycerol kinase 1 from Streptomyces avermitilis (strain ATCC 31267 / DSM 46492 / JCM 5070 / NBRC 14893 / NCIMB 12804 / NRRL 8165 / MA-4680).